The sequence spans 479 residues: Cardiolipin synthase A (479 aa).

Transmembrane regions (helical) follow at residues 8–28 (LLAY…IHAV) and 38–58 (IAWA…YLIF). 2 consecutive PLD phosphodiesterase domains span residues 218-245 (VNFR…GDEY) and 392-419 (TPGF…DNRS). Active-site residues include histidine 223, lysine 225, aspartate 230, histidine 397, lysine 399, and aspartate 404.

This sequence belongs to the phospholipase D family. Cardiolipin synthase subfamily. ClsA sub-subfamily.

It localises to the cell inner membrane. It carries out the reaction 2 a 1,2-diacyl-sn-glycero-3-phospho-(1'-sn-glycerol) = a cardiolipin + glycerol. Catalyzes the reversible phosphatidyl group transfer from one phosphatidylglycerol molecule to another to form cardiolipin (CL) (diphosphatidylglycerol) and glycerol. The chain is Cardiolipin synthase A from Pseudomonas fluorescens (strain SBW25).